A 330-amino-acid chain; its full sequence is Beta-hexosaminidase (330 aa).

Substrate contacts are provided by residues D62, R70, R130, and 160-161 (KH). Catalysis depends on H173, which acts as the Proton donor/acceptor. D242 serves as the catalytic Nucleophile.

Belongs to the glycosyl hydrolase 3 family. NagZ subfamily.

It localises to the cytoplasm. It catalyses the reaction Hydrolysis of terminal non-reducing N-acetyl-D-hexosamine residues in N-acetyl-beta-D-hexosaminides.. Its pathway is cell wall biogenesis; peptidoglycan recycling. In terms of biological role, plays a role in peptidoglycan recycling by cleaving the terminal beta-1,4-linked N-acetylglucosamine (GlcNAc) from peptide-linked peptidoglycan fragments, giving rise to free GlcNAc, anhydro-N-acetylmuramic acid and anhydro-N-acetylmuramic acid-linked peptides. This is Beta-hexosaminidase from Vibrio cholerae serotype O1 (strain ATCC 39541 / Classical Ogawa 395 / O395).